A 168-amino-acid polypeptide reads, in one-letter code: Small ribosomal subunit protein uS9 (168 aa).

Residues M1–A11 are compositionally biased toward low complexity. Residues M1 to R36 are disordered.

The protein belongs to the universal ribosomal protein uS9 family.

The polypeptide is Small ribosomal subunit protein uS9 (Pseudarthrobacter chlorophenolicus (strain ATCC 700700 / DSM 12829 / CIP 107037 / JCM 12360 / KCTC 9906 / NCIMB 13794 / A6) (Arthrobacter chlorophenolicus)).